We begin with the raw amino-acid sequence, 154 residues long: MTIWVDADACPNVIKEILYRAAERMQMPLVLVANQSLRVPPSRFIRTLRVAAGFDVADNEIVRQCEAGDLVITADIPLAAEAIEKGAAAINPRGERYTPATIRERLTMRDFMDTLRASGIQTGGPDSLSQRDRQAFAAELEKWWLEVQRSRGQM.

This sequence belongs to the UPF0178 family.

The polypeptide is UPF0178 protein YaiI (Escherichia coli (strain ATCC 8739 / DSM 1576 / NBRC 3972 / NCIMB 8545 / WDCM 00012 / Crooks)).